Reading from the N-terminus, the 544-residue chain is Chaperonin GroEL (544 aa).

Residues 30-33, 87-91, Gly-414, 478-480, and Asp-494 contribute to the ATP site; these read TLGP, DGTTT, and NAL.

This sequence belongs to the chaperonin (HSP60) family. Forms a cylinder of 14 subunits composed of two heptameric rings stacked back-to-back. Interacts with the co-chaperonin GroES.

It is found in the cytoplasm. It catalyses the reaction ATP + H2O + a folded polypeptide = ADP + phosphate + an unfolded polypeptide.. Together with its co-chaperonin GroES, plays an essential role in assisting protein folding. The GroEL-GroES system forms a nano-cage that allows encapsulation of the non-native substrate proteins and provides a physical environment optimized to promote and accelerate protein folding. This chain is Chaperonin GroEL, found in Pelotomaculum thermopropionicum (strain DSM 13744 / JCM 10971 / SI).